Reading from the N-terminus, the 200-residue chain is NADH-quinone oxidoreductase subunit C (200 aa).

This sequence belongs to the complex I 30 kDa subunit family. In terms of assembly, NDH-1 is composed of 14 different subunits. Subunits NuoB, C, D, E, F, and G constitute the peripheral sector of the complex.

It localises to the cell inner membrane. The catalysed reaction is a quinone + NADH + 5 H(+)(in) = a quinol + NAD(+) + 4 H(+)(out). NDH-1 shuttles electrons from NADH, via FMN and iron-sulfur (Fe-S) centers, to quinones in the respiratory chain. The immediate electron acceptor for the enzyme in this species is believed to be ubiquinone. Couples the redox reaction to proton translocation (for every two electrons transferred, four hydrogen ions are translocated across the cytoplasmic membrane), and thus conserves the redox energy in a proton gradient. This chain is NADH-quinone oxidoreductase subunit C, found in Burkholderia ambifaria (strain MC40-6).